Here is a 650-residue protein sequence, read N- to C-terminus: MSLLSTIDSPQDVKRLDHEELVTLAAEIRDFLIHAVARTGGHLGPNLGAVELTLAIHRVFDSPFDRVLWDTGHQSYVHKILTGRREQFDRLRQRGGLSGYPSQAESEHDIIENSHASTALSYADGLSRAYELRGENRAVVAVVGDGALTGGMCWEALNNIAASDRQVVIVVNDNGRSYSPTIGGLADHLASLRLAPEYEQVLDVVKQVLGRTPLVGAPLFDALHGIKKGIKDVVTPQGMFEDLGLKYVGPVDGHDVVAMESALRRAKDFGGPVIVHAMTRKGFGYPAAEQDDADNFHAVGVIDPVTGKPKSASKGTTWTSIFSEEIVRIGSERPDVVTMTAAMLQPVGLKSFAKAFPDRVFDVGIAEQHAVTSAAGLAMGGLKPVVCIYATFLNRAFDQVLMDVAMHRQPVTFVLDRAGITGEDGASHNGMWDMSFLQVVPGLAIAAPRDAATLRAELDEAVSNTDGPTVVRYPKGKVAADSPAIDQVGGVDVLYRAPAAARHREVLLVSIGAMAPTCLDVAERVASQGIGITVVDPRWVKPLDPALVDLARDHDLVVTVEDNGRVGGVGACVAQLLRDADVDVPVREFGVAQRFLDHGKRDDVLAEVGLAPQDLARKVIEAVAKRQHALMGDEVGADESNQTPAGGGQA.

Thiamine diphosphate contacts are provided by residues histidine 73 and 114–116 (SHA). Aspartate 145 lines the Mg(2+) pocket. Thiamine diphosphate-binding positions include 146–147 (GA), asparagine 174, tyrosine 285, and glutamate 367. Asparagine 174 is a Mg(2+) binding site. The interval 631–650 (MGDEVGADESNQTPAGGGQA) is disordered.

It belongs to the transketolase family. DXPS subfamily. In terms of assembly, homodimer. Mg(2+) serves as cofactor. Thiamine diphosphate is required as a cofactor.

The catalysed reaction is D-glyceraldehyde 3-phosphate + pyruvate + H(+) = 1-deoxy-D-xylulose 5-phosphate + CO2. It participates in metabolic intermediate biosynthesis; 1-deoxy-D-xylulose 5-phosphate biosynthesis; 1-deoxy-D-xylulose 5-phosphate from D-glyceraldehyde 3-phosphate and pyruvate: step 1/1. In terms of biological role, catalyzes the acyloin condensation reaction between C atoms 2 and 3 of pyruvate and glyceraldehyde 3-phosphate to yield 1-deoxy-D-xylulose-5-phosphate (DXP). The chain is 1-deoxy-D-xylulose-5-phosphate synthase from Parafrankia sp. (strain EAN1pec).